Reading from the N-terminus, the 374-residue chain is UDP-N-acetylglucosamine--N-acetylmuramyl-(pentapeptide) pyrophosphoryl-undecaprenol N-acetylglucosamine transferase (374 aa).

Residues 13 to 15 (TGG), Asn-124, Arg-165, Ser-193, and Gln-294 each bind UDP-N-acetyl-alpha-D-glucosamine.

This sequence belongs to the glycosyltransferase 28 family. MurG subfamily.

The protein resides in the cell inner membrane. The catalysed reaction is di-trans,octa-cis-undecaprenyl diphospho-N-acetyl-alpha-D-muramoyl-L-alanyl-D-glutamyl-meso-2,6-diaminopimeloyl-D-alanyl-D-alanine + UDP-N-acetyl-alpha-D-glucosamine = di-trans,octa-cis-undecaprenyl diphospho-[N-acetyl-alpha-D-glucosaminyl-(1-&gt;4)]-N-acetyl-alpha-D-muramoyl-L-alanyl-D-glutamyl-meso-2,6-diaminopimeloyl-D-alanyl-D-alanine + UDP + H(+). The protein operates within cell wall biogenesis; peptidoglycan biosynthesis. In terms of biological role, cell wall formation. Catalyzes the transfer of a GlcNAc subunit on undecaprenyl-pyrophosphoryl-MurNAc-pentapeptide (lipid intermediate I) to form undecaprenyl-pyrophosphoryl-MurNAc-(pentapeptide)GlcNAc (lipid intermediate II). The polypeptide is UDP-N-acetylglucosamine--N-acetylmuramyl-(pentapeptide) pyrophosphoryl-undecaprenol N-acetylglucosamine transferase (Rhizobium meliloti (strain 1021) (Ensifer meliloti)).